The sequence spans 549 residues: Acetyl-coenzyme A transporter 1 (549 aa).

Basic and acidic residues predominate over residues 1 to 12 (MSPTISHKDSSR). Residues 1 to 46 (MSPTISHKDSSRQRRPGNFSHSLDMKSGPLPPGGWDDSHLDSAGRE) are disordered. Topologically, residues 1 to 74 (MSPTISHKDS…PQSFRAELSS (74 aa)) are cytoplasmic. A phosphoserine mark is found at Ser-22 and Ser-42. Residues 36–46 (DDSHLDSAGRE) are compositionally biased toward basic and acidic residues. Residues 75 to 95 (ILLLLFLYVLQGIPLGLAGSI) traverse the membrane as a helical segment. Residues 96–113 (PLILQSKNVSYTDQAFFS) are Extracellular-facing. Asn-103 carries N-linked (GlcNAc...) asparagine glycosylation. The helical transmembrane segment at 114 to 134 (FVFWPFSLKLLWAPLVDAVYV) threads the bilayer. The Cytoplasmic portion of the chain corresponds to 135 to 141 (KNFGRRK). The chain crosses the membrane as a helical span at residues 142-162 (SWLVPTQYILGLFMIYLSTQV). Topologically, residues 163–175 (DRLLGNTDDRTPD) are extracellular. Residues 176–196 (VIALTVAFFLFEFLAATQDIA) traverse the membrane as a helical segment. The Cytoplasmic portion of the chain corresponds to 197-217 (VDGWALTMLSRENVGYASTCN). Residues 218-238 (SVGQTAGYFLGNVLFLALESA) form a helical membrane-spanning segment. Residues 239–256 (DFCNKYLRFQPQPRGIVT) are Extracellular-facing. The chain crosses the membrane as a helical span at residues 257 to 277 (LSDFLFFWGTVFLITTTLVAL). Residues 278–299 (LKKENEVSVVKEETQGITDTYK) lie on the Cytoplasmic side of the membrane. The helical transmembrane segment at 300–320 (LLFAIIKMPAVLTFCLLILTA) threads the bilayer. Residues 321-343 (KIGFSAADAVTGLKLVEEGVPKE) are Extracellular-facing. Residues 344–364 (HLALLAVPMVPLQIILPLIIS) traverse the membrane as a helical segment. Residues 365-378 (KYTAGPQPLNTFYK) are Cytoplasmic-facing. A helical transmembrane segment spans residues 379–398 (AMPYRLLLGLEYALLVWWTP). Residues 399 to 404 (KVEHQG) lie on the Extracellular side of the membrane. A helical transmembrane segment spans residues 405–425 (GFPIYYYIVVLLSYALHQVTV). Residues 426–508 (YSMYVSIMAF…LGGSCVTALD (83 aa)) lie on the Cytoplasmic side of the membrane. The helical transmembrane segment at 509-529 (GYYVESIICVFIGFGWWFFLG) threads the bilayer. Residues 530 to 549 (PKFKKLQDEGSSSWKCKRNN) lie on the Extracellular side of the membrane.

It belongs to the SLC33A transporter family. As to quaternary structure, homodimerizes. Ubiquitous. Detected in heart, brain, placenta, lung, liver, skeletal muscle, kidney and pancreas. With strongest signals in pancreas.

The protein localises to the endoplasmic reticulum membrane. The enzyme catalyses acetyl-CoA(in) = acetyl-CoA(out). In terms of biological role, acetyl-CoA transporter that mediates active acetyl-CoA import through the endoplasmic reticulum (ER) membrane into the ER lumen where specific ER-based acetyl-CoA:lysine acetyltransferases are responsible for the acetylation of ER-based protein substrates, such as BACE1. Necessary for O-acetylation of gangliosides. The chain is Acetyl-coenzyme A transporter 1 from Homo sapiens (Human).